The chain runs to 312 residues: tRNA pseudouridine synthase B (312 aa).

The active-site Nucleophile is Asp-37.

The protein belongs to the pseudouridine synthase TruB family. Type 1 subfamily.

It carries out the reaction uridine(55) in tRNA = pseudouridine(55) in tRNA. Functionally, responsible for synthesis of pseudouridine from uracil-55 in the psi GC loop of transfer RNAs. The chain is tRNA pseudouridine synthase B from Deinococcus geothermalis (strain DSM 11300 / CIP 105573 / AG-3a).